Reading from the N-terminus, the 232-residue chain is MAREGKRIRAAREGLEPTKLYAIDEAIKLVKSKASAKFDETVEISMNLGVDPRHADQMVRGVCNLPNGSGRTVRVAVFARGAKADDAKAAGADIVGAEDLLEIVQGGKIEFDRCIATPDLMPLVGRLGKVLGPRGLMPNPKVGTVTMDVKGAVAAAKGGAVEFRVEKAGIIHAGVGKVSFDEQKLVENIKAFADAVAKAKPAGAKGTYIQRIAVTSTMGPGVKVEPSTVLTA.

This sequence belongs to the universal ribosomal protein uL1 family. As to quaternary structure, part of the 50S ribosomal subunit.

In terms of biological role, binds directly to 23S rRNA. The L1 stalk is quite mobile in the ribosome, and is involved in E site tRNA release. Its function is as follows. Protein L1 is also a translational repressor protein, it controls the translation of the L11 operon by binding to its mRNA. This is Large ribosomal subunit protein uL1 from Methylorubrum populi (strain ATCC BAA-705 / NCIMB 13946 / BJ001) (Methylobacterium populi).